Here is a 92-residue protein sequence, read N- to C-terminus: MANTASAEKRNRQAQKRRARNVQVRTGVKSAVKKLREAIAKGDPATTQAALKSAEKTIGKAASKGVLHRNAASRKISRLAKAAAKPAAAAAK.

A disordered region spans residues Met-1–Val-28.

Belongs to the bacterial ribosomal protein bS20 family.

In terms of biological role, binds directly to 16S ribosomal RNA. The protein is Small ribosomal subunit protein bS20 of Anaeromyxobacter dehalogenans (strain 2CP-C).